The chain runs to 359 residues: N-acetylneuraminate-9-phosphate synthase (359 aa).

N6-acetyllysine occurs at positions 61, 74, and 79. S275 bears the Phosphoserine mark. At K290 the chain carries N6-acetyllysine. An AFP-like domain is found at 294–353 (SVVAKVKIPEGTILTMDMLTVKVGEPKGYPPEDIFNLVGKKVLVTVEEDDTIMEELVDNH).

In terms of tissue distribution, ubiquitous.

The catalysed reaction is aldehydo-N-acetyl-D-mannosamine 6-phosphate + phosphoenolpyruvate + H2O = N-acetylneuraminate 9-phosphate + phosphate. It catalyses the reaction aldehydo-D-mannose 6-phosphate + phosphoenolpyruvate + H2O = 3-deoxy-D-glycero-beta-D-galacto-non-2-ulopyranosonate 9-phosphate + phosphate. Functionally, catalyzes the condensation of phosphoenolpyruvate (PEP) and N-acetylmannosamine 6-phosphate (ManNAc-6-P) to synthesize N-acetylneuraminate-9-phosphate (Neu5Ac-9-P). Also catalyzes the condensation of PEP and D-mannose 6-phosphate (Man-6-P) to produce 3-deoxy-D-glycero-beta-D-galacto-non-2-ulopyranosonate 9-phosphate (KDN-9-P). Neu5Ac-9-P and KDN-9-P are the phosphorylated forms of sialic acids N-acetylneuraminic acid (Neu5Ac) and deaminoneuraminic acid (KDN), respectively. Required for brain and skeletal development. This chain is N-acetylneuraminate-9-phosphate synthase, found in Homo sapiens (Human).